Reading from the N-terminus, the 263-residue chain is Interleukin-33 (263 aa).

Positions 1 to 17 (MKYSTTKIPPAKMNSSA) are enriched in polar residues. Residues 1-28 (MKYSTTKIPPAKMNSSADKALVKSPKLR) form a disordered region. A homeodomain-like HTH domain region spans residues 1-65 (MKYSTTKIPP…CYFRKEITKR (65 aa)). Residues 62 to 103 (ITKRYSPRTAEKCRKQCLVFTACHQQLNKDFTSDVPMLQKCF) form an interaction with RELA region.

This sequence belongs to the IL-1 family. Highly divergent. In terms of assembly, forms a 1:1:1 heterotrimeric complex with its primary high-affinity receptor IL1RL1 and the coreceptor IL1RAP. Interacts with cargo receptor TMED10; the interaction mediates the translocation from the cytoplasm into the ERGIC (endoplasmic reticulum-Golgi intermediate compartment) and thereby secretion. In terms of processing, the full-length protein can be released from cells and is able to signal via the IL1RL1/ST2 receptor. However, proteolytic processing by CELA1, CSTG/cathepsin G and ELANE/neutrophil elastase produces C-terminal peptides that are more active than the unprocessed full-length protein. May also be proteolytically processed by calpains. Proteolytic cleavage mediated by apoptotic caspases including CASP3 and CASP7 results in IL33 inactivation. In vitro proteolytic cleavage by CASP1 was reported but could not be confirmed in vivo suggesting that IL33 is probably not a direct substrate for that caspase. In terms of tissue distribution, expressed in cultured umbilical artery smooth muscle cells after stimulation with IL1A and IL1B, and to a lesser extent with IFNG. Expressed in vasospastic cerebral arteries after subarachnoid hemorrhage.

Its subcellular location is the nucleus. The protein resides in the chromosome. The protein localises to the cytoplasm. It is found in the cytoplasmic vesicle. It localises to the secretory vesicle. Its subcellular location is the secreted. Its function is as follows. Cytokine that binds to and signals through the IL1RL1/ST2 receptor which in turn activates NF-kappa-B and MAPK signaling pathways in target cells. Involved in the maturation of Th2 cells inducing the secretion of T-helper type 2-associated cytokines. Also involved in activation of mast cells, basophils, eosinophils and natural killer cells. Acts as a chemoattractant for Th2 cells, and may function as an 'alarmin', that amplifies immune responses during tissue injury. Induces rapid UCP2-dependent mitochondrial rewiring that attenuates the generation of reactive oxygen species and preserves the integrity of Krebs cycle required for persistent production of itaconate and subsequent GATA3-dependent differentiation of inflammation-resolving alternatively activated macrophages. Functionally, in quiescent endothelia the uncleaved form is constitutively and abundantly expressed, and acts as a chromatin-associated nuclear factor with transcriptional repressor properties, it may sequester nuclear NF-kappaB/RELA, lowering expression of its targets. This form is rapidely lost upon angiogenic or pro-inflammatory activation. This chain is Interleukin-33 (IL33), found in Canis lupus familiaris (Dog).